The chain runs to 299 residues: Probable lipid kinase YegS (299 aa).

Positions 2-133 constitute a DAGKc domain; sequence AEFPASLLIL…IDMAQVNKQT (132 aa). ATP is bound by residues Thr-40, 66-72, and Thr-95; that span reads GDGTINE. 3 residues coordinate Mg(2+): Leu-215, Asp-218, and Leu-220. Glu-271 (proton acceptor) is an active-site residue.

It belongs to the diacylglycerol/lipid kinase family. YegS lipid kinase subfamily. Mg(2+) is required as a cofactor. The cofactor is Ca(2+).

It is found in the cytoplasm. Probably phosphorylates lipids; the in vivo substrate is unknown. This chain is Probable lipid kinase YegS, found in Escherichia coli O127:H6 (strain E2348/69 / EPEC).